The chain runs to 596 residues: Transketolase-like protein 1 (596 aa).

Histidine 46 lines the substrate pocket. Residues serine 49 and 94–96 (GWL) contribute to the thiamine diphosphate site. Position 126 (aspartate 126) interacts with Mg(2+). The thiamine diphosphate site is built by glycine 127 and asparagine 156. 2 residues coordinate Mg(2+): asparagine 156 and leucine 158. The thiamine diphosphate site is built by lysine 218 and histidine 232. Residues histidine 232, arginine 292, and serine 319 each contribute to the substrate site. Thiamine diphosphate contacts are provided by glutamate 340 and phenylalanine 366. Residue glutamate 340 is the Proton donor of the active site. Positions 390 and 398 each coordinate substrate. A thiamine diphosphate-binding site is contributed by glutamine 402. A substrate-binding site is contributed by arginine 448.

It belongs to the transketolase family. Homodimer. Mg(2+) is required as a cofactor. Ca(2+) serves as cofactor. Requires Mn(2+) as cofactor. It depends on Co(2+) as a cofactor. The cofactor is thiamine diphosphate. As to expression, widely expressed. Expressed in endothelial cells and in peripheral neurons (at protein level). Not expressed in fetal neocortex. In terms of tissue distribution, expressed in fetal neocortex.

The protein resides in the cytoplasm. It catalyses the reaction D-sedoheptulose 7-phosphate + D-glyceraldehyde 3-phosphate = aldehydo-D-ribose 5-phosphate + D-xylulose 5-phosphate. Functionally, catalyzes the transfer of a two-carbon ketol group from a ketose donor to an aldose acceptor, via a covalent intermediate with the cofactor thiamine pyrophosphate. During fetal neocortex development, may be essential to maintain the full number of basal radial glia (bRG). bRG are neural progenitor cells that undergo asymmetric divisions, generating a bRG (self-renewal) and a neuron, in contrast to basal intermediate progenitors (bIPs), which typically divide once to give rise to 2 neurons. bRG generate more cortical neurons over time than bIPs. The protein is Transketolase-like protein 1 (TKTL1) of Homo sapiens (Human).